The primary structure comprises 202 residues: Transmembrane protein 223 (202 aa).

The Mitochondrial matrix portion of the chain corresponds to 1 to 43 (MAAPGRRWSVLLFRALQSLSARRALHDTAPPRDVLLFEHERGR). The chain crosses the membrane as a helical span at residues 44-64 (FFAVLGLFCAGQGVFWASLAI). The Mitochondrial intermembrane portion of the chain corresponds to 65-97 (ASLARPPTPVRPTDAKTPDHGGLDLRSTLWRYG). A helical transmembrane segment spans residues 98–118 (LAVGCGAIGSLVLGAGLLFSL). Residues 119-202 (RSVRSVMLRA…DNTVGAYRSL (84 aa)) are Mitochondrial matrix-facing.

It belongs to the TMEM223 family. In terms of assembly, associates with the mitochondrial ribosome.

The protein resides in the mitochondrion inner membrane. Functionally, mitochondrial ribosome-associated protein involved in the first steps of cytochrome c oxidase complex (complex IV) biogenesis. Stimulates the translation of MT-CO1 mRNA and is a constituent of early MT-CO1 assembly intermediates. The protein is Transmembrane protein 223 of Bos taurus (Bovine).